Reading from the N-terminus, the 260-residue chain is Carbonic anhydrase 3 (260 aa).

Position 2 is an N-acetylalanine (Ala2). Residues 3–259 enclose the Alpha-carbonic anhydrase domain; that stretch reads KEWGYADHNG…IKGRIVKASF (257 aa). Phosphoserine is present on residues Ser29, Ser43, Ser50, and Ser55. An involved in proton transfer region spans residues 64–67; it reads KTCR. Thr73 is modified (phosphothreonine). Zn(2+) contacts are provided by His94, His96, and His119. Position 127 is a phosphotyrosine (Tyr127). S-glutathionyl cysteine occurs at positions 182 and 187. 198-199 contacts substrate; that stretch reads TT. Phosphothreonine is present on Thr216. Ser219 is subject to Phosphoserine.

Belongs to the alpha-carbonic anhydrase family. Zn(2+) is required as a cofactor. S-thiolated both by thiol-disulfide exchange with glutathione disulfide and by oxyradical-initiated S-thiolation with reduced glutathione. Post-translationally, S-glutathionylated in hepatocytes under oxidative stress.

Its subcellular location is the cytoplasm. The enzyme catalyses hydrogencarbonate + H(+) = CO2 + H2O. Its activity is regulated as follows. Inhibited by acetazolamide. Functionally, reversible hydration of carbon dioxide. The chain is Carbonic anhydrase 3 (CA3) from Bos taurus (Bovine).